A 416-amino-acid chain; its full sequence is Chaperone protein dnaJ A6 (416 aa).

The J domain occupies 12–73 (KYYEVLGVPK…EKRDIYDQYG (62 aa)). The segment at 133–217 (GSMKKLSLSR…CRASKVIQEK (85 aa)) adopts a CR-type zinc-finger fold. Cys146, Cys149, Cys162, Cys165, Cys189, Cys192, Cys205, and Cys208 together coordinate Zn(2+). 3 CXXCXGXG motif repeats span residues 146–153 (CPKCKGKG), 162–169 (CYGCHGVG), and 189–196 (CPECRGSG). Positions 380-399 (HDVNIEEEMRRKQYQRKQEA) are enriched in basic and acidic residues. Residues 380–416 (HDVNIEEEMRRKQYQRKQEAYDEDEEEDAPRVQCAQQ) are disordered.

This sequence belongs to the DnaJ family. As to quaternary structure, interacts with ZFP1.

It is found in the nucleus. Its subcellular location is the cytoplasm. Involved in disease resistance. Acts as a negative regulator of innate immunity to the rice blast fungus (Magnaporthe oryzae). Acts as a negative regulator of the pathogen-associated molecular pattern (PAMP)-triggered immunity (PTI) response through the inhibition of reactive oxygen species (ROS) accumulation and expression of defense-related genes. May function via the ubiquitin-proteasome degradation pathway. The sequence is that of Chaperone protein dnaJ A6 from Oryza sativa subsp. japonica (Rice).